The following is a 230-amino-acid chain: Ribose-5-phosphate isomerase A (230 aa).

Residues 29 to 32, 85 to 88, and 98 to 101 each bind substrate; these read TGST, DGAD, and KGGG. E107 (proton acceptor) is an active-site residue. Substrate is bound at residue K125.

The protein belongs to the ribose 5-phosphate isomerase family. In terms of assembly, homodimer.

It catalyses the reaction aldehydo-D-ribose 5-phosphate = D-ribulose 5-phosphate. The protein operates within carbohydrate degradation; pentose phosphate pathway; D-ribose 5-phosphate from D-ribulose 5-phosphate (non-oxidative stage): step 1/1. Catalyzes the reversible conversion of ribose-5-phosphate to ribulose 5-phosphate. The protein is Ribose-5-phosphate isomerase A of Staphylococcus epidermidis (strain ATCC 35984 / DSM 28319 / BCRC 17069 / CCUG 31568 / BM 3577 / RP62A).